The following is a 101-amino-acid chain: Vacuolar ATPase assembly integral membrane protein VMA21 (101 aa).

Residues 1 to 25 lie on the Cytoplasmic side of the membrane; sequence MERLDKAALNALQPSDFRNESSLAS. Residues 26-46 traverse the membrane as a helical segment; sequence TLKTLLFFTALMITVPIGLYF. The Lumenal segment spans residues 47-65; sequence TTKSYVFEGAFGMSNRDSY. A helical transmembrane segment spans residues 66–86; sequence FYAAIVAVVAVHVVLALFVYV. Residues 87-101 lie on the Cytoplasmic side of the membrane; sequence AWNEGSRQWREGKQD.

Belongs to the VMA21 family. In terms of assembly, associates with the V0 complex of the vacuolar ATPase (V-ATPase). Interacts with ATP6AP2.

Its subcellular location is the endoplasmic reticulum membrane. The protein localises to the endoplasmic reticulum-Golgi intermediate compartment membrane. The protein resides in the cytoplasmic vesicle. It is found in the COPII-coated vesicle membrane. In terms of biological role, required for the assembly of the V0 complex of the vacuolar ATPase (V-ATPase) in the endoplasmic reticulum. This is Vacuolar ATPase assembly integral membrane protein VMA21 from Bos taurus (Bovine).